Consider the following 437-residue polypeptide: Transcription factor ets-4 (437 aa).

The segment at 1–30 is disordered; that stretch reads MNGTGSVGHRWNSLSPEPHSGTESTASTPF. Over residues 21–30 the composition is skewed to polar residues; sequence GTESTASTPF. Lys32 participates in a covalent cross-link: Glycyl lysine isopeptide (Lys-Gly) (interchain with G-Cter in SUMO). Ser73 is modified (phosphoserine). Lys83 participates in a covalent cross-link: Glycyl lysine isopeptide (Lys-Gly) (interchain with G-Cter in SUMO). One can recognise a PNT domain in the interval 120 to 202; sequence HLIQDISTTC…AQLQVWKTGT (83 aa). Residues 275–302 are disordered; sequence QGTVLPSPSNSDTSSNGSSQDMNDDDID. The span at 280–293 shows a compositional bias: low complexity; sequence PSPSNSDTSSNGSS. The ETS DNA-binding region spans 349-432; sequence VHLWQFIREL…KKQRLVYKFL (84 aa).

Belongs to the ETS family. In terms of assembly, may interact with cebp-1. May interact with tdpt-1 to facilitate its sumoylation. Post-translationally, phosphorylation is required for axon regeneration. In terms of processing, sumoylated; sumoylation inhibits phosphorylation, which is required for probable interaction with cebp-1 and consequently the expression of svh-2. In terms of tissue distribution, expressed in cells of the anterior and posterior bulbs of the pharynx, seam cells, a few unidentified cells of the vulva, the hypodermis, several unidentified neurons, labial socket cells of the head and rectal cells.

The protein localises to the nucleus. Its function is as follows. Transcription factor which binds to 5'-GGAA/T-3' DNA consensus sequences. Both positively and negatively regulates the expression of target genes. Plays a role in the regulation of adult lifespan, which may in part be through modulation of daf-16 activity. Regulates the expression of genes such as svh-2 in response to axon injury and in addition, may function downstream of the cAMP signaling pathway to promote axon regeneration. Regulates the expression of lipid metabolism genes and may also control the expression of the RNA-binding protein rege-1 which too has been implicated in the control of fat accumulation. The protein is Transcription factor ets-4 of Caenorhabditis elegans.